The chain runs to 452 residues: Tripartite motif-containing protein 51 (452 aa).

An RING-type zinc finger spans residues 15-56 (CPICMNYFLDPVTIDCGHSFCRPCLYLNWQDTAVLAQCSECK). A B box-type zinc finger spans residues 88–129 (SEEQICGMHRETKKMFCEVDKSLLCLPCSNSQEHRNHIHCPI). Zn(2+)-binding residues include Cys93, His96, Cys115, and His121. The region spanning 269–452 (ELSAGPITGL…LRPIFCCSHF (184 aa)) is the B30.2/SPRY domain.

This sequence belongs to the TRIM/RBCC family.

In Homo sapiens (Human), this protein is Tripartite motif-containing protein 51 (TRIM51).